Consider the following 238-residue polypeptide: Ubiquinone biosynthesis O-methyltransferase (238 aa).

S-adenosyl-L-methionine is bound by residues Arg-40, Gly-59, Asp-81, and Met-126.

This sequence belongs to the methyltransferase superfamily. UbiG/COQ3 family.

It catalyses the reaction a 3-demethylubiquinol + S-adenosyl-L-methionine = a ubiquinol + S-adenosyl-L-homocysteine + H(+). The enzyme catalyses a 3-(all-trans-polyprenyl)benzene-1,2-diol + S-adenosyl-L-methionine = a 2-methoxy-6-(all-trans-polyprenyl)phenol + S-adenosyl-L-homocysteine + H(+). The protein operates within cofactor biosynthesis; ubiquinone biosynthesis. In terms of biological role, O-methyltransferase that catalyzes the 2 O-methylation steps in the ubiquinone biosynthetic pathway. The protein is Ubiquinone biosynthesis O-methyltransferase of Neisseria meningitidis serogroup C (strain 053442).